The primary structure comprises 154 residues: Large ribosomal subunit protein uL15 (154 aa).

Residues methionine 1–leucine 57 are disordered. Gly residues predominate over residues isoleucine 23–methionine 35.

It belongs to the universal ribosomal protein uL15 family. In terms of assembly, part of the 50S ribosomal subunit.

Functionally, binds to the 23S rRNA. The chain is Large ribosomal subunit protein uL15 from Thermosynechococcus vestitus (strain NIES-2133 / IAM M-273 / BP-1).